The following is a 176-amino-acid chain: Macro domain-containing protein mll7730 (176 aa).

The region spanning 1–174 is the Macro domain; the sequence is MSKALDRIRI…LYLRAVAALR (174 aa).

This sequence belongs to the MacroD-type family.

The protein is Macro domain-containing protein mll7730 of Mesorhizobium japonicum (strain LMG 29417 / CECT 9101 / MAFF 303099) (Mesorhizobium loti (strain MAFF 303099)).